The sequence spans 215 residues: UPF0319 protein VV2_0960 (215 aa).

The signal sequence occupies residues 1-21; that stretch reads MNIIKPLTCILAMSISGLATA.

It belongs to the UPF0319 family.

The polypeptide is UPF0319 protein VV2_0960 (Vibrio vulnificus (strain CMCP6)).